The primary structure comprises 207 residues: Ras-related protein Rab-8A (207 aa).

Residues S17, G18, V19, G20, K21, T22, C23, S39, and T40 each contribute to the GTP site. T22 contributes to the Mg(2+) binding site. 2 short sequence motifs (switch) span residues 31–45 (DAFN…GIDF) and 63–80 (DTAG…YYRG). The Mg(2+) site is built by T40 and D63. The GTP site is built by G66, N121, K122, D124, A152, and K153. At C204 the chain carries Cysteine methyl ester. C204 carries the S-geranylgeranyl cysteine lipid modification. Residues 205-207 (VLL) constitute a propeptide, removed in mature form.

It belongs to the small GTPase superfamily. Rab family. It depends on Mg(2+) as a cofactor.

It is found in the cell membrane. The protein resides in the golgi apparatus. The protein localises to the endosome membrane. It localises to the recycling endosome membrane. Its subcellular location is the cell projection. It is found in the cilium. The protein resides in the cytoplasmic vesicle. The protein localises to the phagosome membrane. It localises to the cytoplasm. Its subcellular location is the cytoskeleton. It is found in the microtubule organizing center. The protein resides in the centrosome. The protein localises to the centriole. It localises to the cilium basal body. Its subcellular location is the midbody. It carries out the reaction GTP + H2O = GDP + phosphate + H(+). Its activity is regulated as follows. Regulated by guanine nucleotide exchange factors (GEFs) which promote the exchange of bound GDP for free GTP, GTPase activating proteins (GAPs) which increase the GTP hydrolysis activity, and GDP dissociation inhibitors (GDIs) which inhibit the dissociation of the nucleotide from the GTPase. Activated in response to insulin. Its function is as follows. The small GTPases Rab are key regulators of intracellular membrane trafficking, from the formation of transport vesicles to their fusion with membranes. Rabs cycle between an inactive GDP-bound form and an active GTP-bound form that is able to recruit to membranes different sets of downstream effectors directly responsible for vesicle formation, movement, tethering and fusion. RAB8A is involved in polarized vesicular trafficking and neurotransmitter release. Together with RAB11A, RAB3IP, the exocyst complex, PARD3, PRKCI, ANXA2, CDC42 and DNMBP promotes transcytosis of PODXL to the apical membrane initiation sites (AMIS), apical surface formation and lumenogenesis. Regulates the compacted morphology of the Golgi. Together with MYO5B and RAB11A participates in epithelial cell polarization. Also involved in membrane trafficking to the cilium and ciliogenesis. Together with MICALL2, may also regulate adherens junction assembly. May play a role in insulin-induced transport to the plasma membrane of the glucose transporter GLUT4 and therefore play a role in glucose homeostasis. Involved in autophagy. Participates in the export of a subset of neosynthesized proteins through a Rab8-Rab10-Rab11-dependent endososomal export route. Targeted to and stabilized on stressed lysosomes through LRRK2 phosphorylation. Suppresses stress-induced lysosomal enlargement through EHBP1 and EHNP1L1 effector proteins. The polypeptide is Ras-related protein Rab-8A (RAB8A) (Gallus gallus (Chicken)).